Here is a 500-residue protein sequence, read N- to C-terminus: Maturase K (500 aa).

The protein belongs to the intron maturase 2 family. MatK subfamily.

The protein localises to the plastid. It localises to the chloroplast. In terms of biological role, usually encoded in the trnK tRNA gene intron. Probably assists in splicing its own and other chloroplast group II introns. This Proboscidea louisianica (Louisiana Devil's-claw) protein is Maturase K.